A 374-amino-acid polypeptide reads, in one-letter code: Ribosomal RNA large subunit methyltransferase G (374 aa).

This sequence belongs to the methyltransferase superfamily. RlmG family.

The protein resides in the cytoplasm. The enzyme catalyses guanosine(1835) in 23S rRNA + S-adenosyl-L-methionine = N(2)-methylguanosine(1835) in 23S rRNA + S-adenosyl-L-homocysteine + H(+). Its function is as follows. Specifically methylates the guanine in position 1835 (m2G1835) of 23S rRNA. This Pseudomonas paraeruginosa (strain DSM 24068 / PA7) (Pseudomonas aeruginosa (strain PA7)) protein is Ribosomal RNA large subunit methyltransferase G.